Consider the following 443-residue polypeptide: Trigger factor (443 aa).

Positions 168 to 254 (GDFVTIDFEG…IKNLKEKKLP (87 aa)) constitute a PPIase FKBP-type domain.

This sequence belongs to the FKBP-type PPIase family. Tig subfamily.

Its subcellular location is the cytoplasm. It catalyses the reaction [protein]-peptidylproline (omega=180) = [protein]-peptidylproline (omega=0). Functionally, involved in protein export. Acts as a chaperone by maintaining the newly synthesized protein in an open conformation. Functions as a peptidyl-prolyl cis-trans isomerase. The chain is Trigger factor from Syntrophus aciditrophicus (strain SB).